Reading from the N-terminus, the 151-residue chain is Protein INO4 (151 aa).

One can recognise a bHLH domain in the interval 45–97 (QIRINHVSSEKKRRELERAIFDELVAVVPDLQPQESRSELIIYLKSLSYLSWL). The tract at residues 112–137 (HEAKTGSSSSSDPVQEQNGNIRDLVP) is disordered. The span at 116-131 (TGSSSSSDPVQEQNGN) shows a compositional bias: polar residues.

In terms of assembly, efficient DNA binding requires dimerization with another bHLH protein.

The protein localises to the nucleus. Functionally, transcriptional activator of phospholipid synthetic genes (such as INO1, CHO1/PSS, CHO2/PEM1, OPI3/PEM2, etc.). This is Protein INO4 (INO4) from Saccharomyces cerevisiae (strain ATCC 204508 / S288c) (Baker's yeast).